A 323-amino-acid polypeptide reads, in one-letter code: tRNA dimethylallyltransferase (323 aa).

12–19 (GPTAAGKT) is an ATP binding site. Substrate is bound at residue 14–19 (TAAGKT). Interaction with substrate tRNA stretches follow at residues 37–40 (DSAL) and 161–165 (QRLIR).

Belongs to the IPP transferase family. In terms of assembly, monomer. It depends on Mg(2+) as a cofactor.

It carries out the reaction adenosine(37) in tRNA + dimethylallyl diphosphate = N(6)-dimethylallyladenosine(37) in tRNA + diphosphate. In terms of biological role, catalyzes the transfer of a dimethylallyl group onto the adenine at position 37 in tRNAs that read codons beginning with uridine, leading to the formation of N6-(dimethylallyl)adenosine (i(6)A). This is tRNA dimethylallyltransferase from Pseudomonas putida (strain ATCC 700007 / DSM 6899 / JCM 31910 / BCRC 17059 / LMG 24140 / F1).